The sequence spans 395 residues: D-alanine--D-alanine ligase (395 aa).

Positions Lys-172–Glu-391 constitute an ATP-grasp domain. Asp-204–Glu-266 provides a ligand contact to ATP. Asp-345, Glu-358, and Asn-360 together coordinate Mg(2+).

Belongs to the D-alanine--D-alanine ligase family. Mg(2+) is required as a cofactor. It depends on Mn(2+) as a cofactor.

The protein localises to the cytoplasm. The enzyme catalyses 2 D-alanine + ATP = D-alanyl-D-alanine + ADP + phosphate + H(+). It functions in the pathway cell wall biogenesis; peptidoglycan biosynthesis. Its function is as follows. Cell wall formation. The protein is D-alanine--D-alanine ligase of Bifidobacterium longum (strain DJO10A).